The following is a 726-amino-acid chain: Type VI secretion system spike protein VgrG1c (726 aa).

The disordered stretch occupies residues 502–522; that stretch reads ANATQSGTKSRSSKGGTPANF. Low complexity predominate over residues 507 to 518; the sequence is SGTKSRSSKGGT.

The protein belongs to the VgrG protein family. In terms of assembly, forms homomultimers. Part of the type VI secretion system (T6SS).

The protein resides in the secreted. In terms of biological role, part of the H1 type VI secretion system (H1-T6SS) specialized secretion system, which delivers several virulence factors in both prokaryotic and eukaryotic cells during infection. Allows the delivery of the Tse5/RhsP1 toxin to target cells where it exerts its toxicity. This chain is Type VI secretion system spike protein VgrG1c, found in Pseudomonas aeruginosa (strain ATCC 15692 / DSM 22644 / CIP 104116 / JCM 14847 / LMG 12228 / 1C / PRS 101 / PAO1).